A 114-amino-acid chain; its full sequence is ATP synthase subunit beta, mitochondrial (114 aa).

44 to 51 (GGAGVGKT) is an ATP binding site.

Belongs to the ATPase alpha/beta chains family. F-type ATPases have 2 components, CF(1) - the catalytic core - and CF(0) - the membrane proton channel. CF(1) has five subunits: alpha(3), beta(3), gamma(1), delta(1), epsilon(1). CF(0) has three main subunits: a, b and c.

Its subcellular location is the mitochondrion. The protein localises to the mitochondrion inner membrane. It carries out the reaction ATP + H2O + 4 H(+)(in) = ADP + phosphate + 5 H(+)(out). Functionally, mitochondrial membrane ATP synthase (F(1)F(0) ATP synthase or Complex V) produces ATP from ADP in the presence of a proton gradient across the membrane which is generated by electron transport complexes of the respiratory chain. F-type ATPases consist of two structural domains, F(1) - containing the extramembraneous catalytic core, and F(0) - containing the membrane proton channel, linked together by a central stalk and a peripheral stalk. During catalysis, ATP synthesis in the catalytic domain of F(1) is coupled via a rotary mechanism of the central stalk subunits to proton translocation. Subunits alpha and beta form the catalytic core in F(1). Rotation of the central stalk against the surrounding alpha(3)beta(3) subunits leads to hydrolysis of ATP in three separate catalytic sites on the beta subunits. This chain is ATP synthase subunit beta, mitochondrial (atp2), found in Penicillium glabrum (Penicillium frequentans).